Here is a 235-residue protein sequence, read N- to C-terminus: Effector CFEM1 (235 aa).

Positions 1–17 (MKFSAPVLAIFLASASA) are cleaved as a signal peptide. A CFEM domain is found at 18 to 114 (QSTAELAAQI…ASASASSSAS (97 aa)). Disulfide bonds link Cys-30/Cys-72, Cys-34/Cys-67, Cys-44/Cys-51, and Cys-53/Cys-88. A heme-binding site is contributed by Asp-48. The GPI-anchor amidated threonine moiety is linked to residue Thr-211. The propeptide at 212 to 235 (AAGVKEEASFFIPAAVALFAVFAV) is removed in mature form.

This sequence belongs to the RBT5 family.

The protein localises to the cell membrane. The protein resides in the secreted. It localises to the host cytoplasm. It is found in the host nucleus. Its subcellular location is the host cell membrane. Its function is as follows. Appears to function during host infection, and may play a role in suppressing the host immune response. The sequence is that of Effector CFEM1 from Marssonina brunnea f. sp. multigermtubi (strain MB_m1) (Marssonina leaf spot fungus).